We begin with the raw amino-acid sequence, 652 residues long: Inactive leucine-rich repeat receptor-like serine/threonine-protein kinase At1g60630 (652 aa).

The first 23 residues, 1–23 (MISSSSCMFFLVFAFFLISPVRS), serve as a signal peptide directing secretion. Residues 24-256 (SDVEALLSLK…SRTKLIGIIS (233 aa)) are Extracellular-facing. LRR repeat units follow at residues 64–84 (SKLV…SLNQ), 85–108 (LDQL…LSGL), 109–132 (VNLK…LTSL), 134–156 (RLKT…LLRL), 158–178 (RLYT…PLNQ), and 179–203 (ATLR…ALNR). N-linked (GlcNAc...) asparagine glycosylation is found at N72, N104, and N120. Residues N185, N205, and N225 are each glycosylated (N-linked (GlcNAc...) asparagine). A helical transmembrane segment spans residues 257 to 277 (GSICGGILILLLTFLLICLLW). Residues 278-652 (RRKRSKSKRE…SLPREDHMSI (375 aa)) lie on the Cytoplasmic side of the membrane. The tract at residues 286–321 (REERRSKRVAESKEAKTAETEEGTSDQKNKRFSWEK) is disordered. In terms of domain architecture, Protein kinase spans 350–624 (KASAETLGRG…VKDARAEAAL (275 aa)). S352 is subject to Phosphoserine. ATP-binding positions include 356 to 364 (LGRGTLGST) and K378. Phosphoserine is present on residues S430 and S433. T509 carries the post-translational modification Phosphothreonine. The disordered stretch occupies residues 630-652 (SDHSPGRWSDTIQSLPREDHMSI).

It belongs to the protein kinase superfamily. Ser/Thr protein kinase family.

It localises to the cell membrane. In Arabidopsis thaliana (Mouse-ear cress), this protein is Inactive leucine-rich repeat receptor-like serine/threonine-protein kinase At1g60630.